Here is a 123-residue protein sequence, read N- to C-terminus: Large ribosomal subunit protein uL14 (123 aa).

This sequence belongs to the universal ribosomal protein uL14 family. As to quaternary structure, part of the 50S ribosomal subunit. Forms a cluster with proteins L3 and L19. In the 70S ribosome, L14 and L19 interact and together make contacts with the 16S rRNA in bridges B5 and B8.

Functionally, binds to 23S rRNA. Forms part of two intersubunit bridges in the 70S ribosome. The protein is Large ribosomal subunit protein uL14 of Chromohalobacter salexigens (strain ATCC BAA-138 / DSM 3043 / CIP 106854 / NCIMB 13768 / 1H11).